The chain runs to 1267 residues: DNA-directed RNA polymerase subunit beta'' (1267 aa).

Cys222, Cys290, Cys297, and Cys300 together coordinate Zn(2+).

The protein belongs to the RNA polymerase beta' chain family. RpoC2 subfamily. In plastids the minimal PEP RNA polymerase catalytic core is composed of four subunits: alpha, beta, beta', and beta''. When a (nuclear-encoded) sigma factor is associated with the core the holoenzyme is formed, which can initiate transcription. It depends on Zn(2+) as a cofactor.

Its subcellular location is the plastid. The protein resides in the chloroplast. It catalyses the reaction RNA(n) + a ribonucleoside 5'-triphosphate = RNA(n+1) + diphosphate. DNA-dependent RNA polymerase catalyzes the transcription of DNA into RNA using the four ribonucleoside triphosphates as substrates. In Emiliania huxleyi (Coccolithophore), this protein is DNA-directed RNA polymerase subunit beta''.